A 171-amino-acid polypeptide reads, in one-letter code: Orotate phosphoribosyltransferase (171 aa).

5-phospho-alpha-D-ribose 1-diphosphate contacts are provided by residues Arg-85, Lys-86, Arg-88, His-90, and 110–118; that span reads EDVVTTGNS. Residues Thr-114 and Arg-142 each coordinate orotate.

This sequence belongs to the purine/pyrimidine phosphoribosyltransferase family. PyrE subfamily. As to quaternary structure, homodimer. Mg(2+) serves as cofactor.

It catalyses the reaction orotidine 5'-phosphate + diphosphate = orotate + 5-phospho-alpha-D-ribose 1-diphosphate. Its pathway is pyrimidine metabolism; UMP biosynthesis via de novo pathway; UMP from orotate: step 1/2. Catalyzes the transfer of a ribosyl phosphate group from 5-phosphoribose 1-diphosphate to orotate, leading to the formation of orotidine monophosphate (OMP). The sequence is that of Orotate phosphoribosyltransferase from Thermoplasma acidophilum (strain ATCC 25905 / DSM 1728 / JCM 9062 / NBRC 15155 / AMRC-C165).